We begin with the raw amino-acid sequence, 459 residues long: uncharacterized protein (459 aa).

An N6-(pyridoxal phosphate)lysine modification is found at K285.

Belongs to the class-III pyridoxal-phosphate-dependent aminotransferase family.

The protein localises to the cytoplasm. This is an uncharacterized protein from Schizosaccharomyces pombe (strain 972 / ATCC 24843) (Fission yeast).